The following is a 125-amino-acid chain: Inner membrane protein YbaN (125 aa).

Over 1–6 (MQRIIL) the chain is Cytoplasmic. Residues 7 to 26 (IIIGWLAVVLGTLGVVLPVL) traverse the membrane as a helical segment. The Periplasmic segment spans residues 27–45 (PTTPFILLAAWCFARSSPR). A helical membrane pass occupies residues 46 to 63 (FHAWLLYRSWFGSYLRFW). Residues 64–74 (QKHHAMPRGVK) are Cytoplasmic-facing. Residues 75–92 (PRAILLILLTFAISLWFV) traverse the membrane as a helical segment. Residues 93-95 (QMP) are Periplasmic-facing. The helical transmembrane segment at 96–118 (WVRIMLLVILACLLFYMWRIPVI) threads the bilayer. At 119–125 (DEKQEKH) the chain is on the cytoplasmic side.

Its subcellular location is the cell inner membrane. This Escherichia coli O157:H7 protein is Inner membrane protein YbaN (ybaN).